A 437-amino-acid chain; its full sequence is Sodium/bile acid cotransporter 4 (437 aa).

The Extracellular segment spans residues 1–103 (MDGLDNTTRL…PPFWDTPLNH (103 aa)). Residues N6, N20, and N26 are each glycosylated (N-linked (GlcNAc...) asparagine). The interval 16–84 (LLPDNLTLSP…GGVAGQDSST (69 aa)) is disordered. A compositionally biased stretch (low complexity) spans 21–50 (LTLSPNASSTSASTLSPLPVTSSPSPGLSL). A helical transmembrane segment spans residues 104-124 (GLNVFVGAALCITMLGLGCTV). The Cytoplasmic segment spans residues 125–140 (DVNHFGAHVRRPVGAL). The helical transmembrane segment at 141 to 161 (LAALCQFGFLPLLAFLLALAF) threads the bilayer. The Extracellular segment spans residues 162-197 (KLDEVAAVAVLLCGCCPGGNLSNLMSLLVDGDMNLS). N-linked (GlcNAc...) asparagine glycosylation is found at N181 and N195. Residues 198–218 (IIMTISSTLLALVLMPLCLWI) form a helical membrane-spanning segment. The Cytoplasmic segment spans residues 219–233 (YSRAWINTPLVQLLP). The chain crosses the membrane as a helical span at residues 234–254 (LGAVTLTLCSTLIPIGLGVFI). Residues 255-267 (RYKYNRVADYIVK) lie on the Extracellular side of the membrane. A helical membrane pass occupies residues 268-288 (VSLCSLLVTLVVLFIMTGTML). The Cytoplasmic segment spans residues 289–291 (GPE). A helical transmembrane segment spans residues 292 to 312 (LLASIPAAVYVVAIFMPLAGY). Residues 313–360 (ASGYGLATLFHLPPNCKRTVCLETGSQNVQLCTAILKLAFPPRFIGSM) lie on the Extracellular side of the membrane. A helical membrane pass occupies residues 361 to 381 (YMFPLLYALFQSAEAGVFVLI). At 382-437 (YKMYGSEILHKREALDEDDDTDISYKKLKEEELADTSYGTVGTDDLVLMETTQTSL) the chain is on the cytoplasmic side.

Belongs to the bile acid:sodium symporter (BASS) (TC 2.A.28) family. Post-translationally, activated following N-terminal proteolytic cleavage by thrombin and/or proteases. In terms of tissue distribution, mainly expressed in the central nervous system cholinergic neurons. Expressed (at protein level) in motor regions of the spinal cord and rhombencephalon, in mesopontine cholinergic neurons, the medial habenula, cholinergic areas of the forebrain, and the gut myenteric plexus.

Its subcellular location is the cell membrane. Its function is as follows. Transporter for bile acids. In Rattus norvegicus (Rat), this protein is Sodium/bile acid cotransporter 4 (Slc10a4).